The sequence spans 345 residues: Biotin synthase (345 aa).

Positions 66–291 constitute a Radical SAM core domain; that stretch reads PEVEVEGIIS…RTMLRFAGGR (226 aa). Cys81, Cys85, and Cys88 together coordinate [4Fe-4S] cluster. [2Fe-2S] cluster contacts are provided by Cys124, Cys157, Cys216, and Arg286.

It belongs to the radical SAM superfamily. Biotin synthase family. In terms of assembly, homodimer. Requires [4Fe-4S] cluster as cofactor. [2Fe-2S] cluster serves as cofactor.

The catalysed reaction is (4R,5S)-dethiobiotin + (sulfur carrier)-SH + 2 reduced [2Fe-2S]-[ferredoxin] + 2 S-adenosyl-L-methionine = (sulfur carrier)-H + biotin + 2 5'-deoxyadenosine + 2 L-methionine + 2 oxidized [2Fe-2S]-[ferredoxin]. It participates in cofactor biosynthesis; biotin biosynthesis; biotin from 7,8-diaminononanoate: step 2/2. In terms of biological role, catalyzes the conversion of dethiobiotin (DTB) to biotin by the insertion of a sulfur atom into dethiobiotin via a radical-based mechanism. This Mycobacterium avium (strain 104) protein is Biotin synthase.